The primary structure comprises 675 residues: PTS system glucose-specific EIICBA component (675 aa).

Positions 3–414 (KKLFGQLQRI…FNFKTPGRED (412 aa)) constitute a PTS EIIC type-1 domain. A run of 11 helical transmembrane segments spans residues 16 to 36 (LMLP…GTAF), 59 to 79 (MMTG…ALGV), 81 to 101 (IGLA…FIIM), 126 to 146 (VLGI…GALA), 173 to 193 (IMMA…WPFI), 199 to 219 (AFST…FGFI), 273 to 293 (FMQG…LAIY), 303 to 323 (VVGG…ITEP), 328 to 348 (FLFV…LSFL), 355 to 375 (LHLG…GILP), and 378 to 398 (TPWW…YVVF). One can recognise a PTS EIIB type-1 domain in the interval 425–506 (SKLPFDVLDA…ARIMNGDITK (82 aa)). The active-site Phosphocysteine intermediate; for EIIB activity is cysteine 447. The region spanning 547 to 651 (DKVFSEKMMG…SVVTPVIITN (105 aa)) is the PTS EIIA type-1 domain. Histidine 599 acts as the Tele-phosphohistidine intermediate; for EIIA activity in catalysis.

The protein resides in the cell membrane. It carries out the reaction N(pros)-phospho-L-histidyl-[protein] + D-glucose(out) = D-glucose 6-phosphate(in) + L-histidyl-[protein]. Its function is as follows. The phosphoenolpyruvate-dependent sugar phosphotransferase system (sugar PTS), a major carbohydrate active transport system, catalyzes the phosphorylation of incoming sugar substrates concomitantly with their translocation across the cell membrane. This system is involved in glucose transport. This chain is PTS system glucose-specific EIICBA component (ptsG), found in Staphylococcus haemolyticus (strain JCSC1435).